A 278-amino-acid chain; its full sequence is UPF0276 protein Swit_4400 (278 aa).

It belongs to the UPF0276 family.

The sequence is that of UPF0276 protein Swit_4400 from Rhizorhabdus wittichii (strain DSM 6014 / CCUG 31198 / JCM 15750 / NBRC 105917 / EY 4224 / RW1) (Sphingomonas wittichii).